Consider the following 389-residue polypeptide: NADH-quinone oxidoreductase subunit D (389 aa).

This sequence belongs to the complex I 49 kDa subunit family. As to quaternary structure, NDH-1 is composed of 14 different subunits. Subunits NuoB, C, D, E, F, and G constitute the peripheral sector of the complex.

It localises to the cell inner membrane. The enzyme catalyses a quinone + NADH + 5 H(+)(in) = a quinol + NAD(+) + 4 H(+)(out). Functionally, NDH-1 shuttles electrons from NADH, via FMN and iron-sulfur (Fe-S) centers, to quinones in the respiratory chain. The immediate electron acceptor for the enzyme in this species is believed to be ubiquinone. Couples the redox reaction to proton translocation (for every two electrons transferred, four hydrogen ions are translocated across the cytoplasmic membrane), and thus conserves the redox energy in a proton gradient. The sequence is that of NADH-quinone oxidoreductase subunit D from Citrifermentans bemidjiense (strain ATCC BAA-1014 / DSM 16622 / JCM 12645 / Bem) (Geobacter bemidjiensis).